Here is a 1358-residue protein sequence, read N- to C-terminus: Xanthine dehydrogenase (1358 aa).

In terms of domain architecture, 2Fe-2S ferredoxin-type spans 18–107; it reads NQLLFFLNGE…GMAVTTIEGL (90 aa). [2Fe-2S] cluster is bound by residues cysteine 56, cysteine 61, cysteine 64, cysteine 89, cysteine 129, cysteine 132, cysteine 164, and cysteine 166. The 195-residue stretch at 253–447 folds into the FAD-binding PCMH-type domain; the sequence is FTGSRVTWYT…ESVFIPYTRP (195 aa). Residues 281 to 288, phenylalanine 366, 376 to 380, aspartate 389, leucine 437, and lysine 455 each bind FAD; these read IVVGNTEI and SIGGN. Residues glutamine 805 and phenylalanine 836 each coordinate Mo-molybdopterin. 2 residues coordinate substrate: glutamate 840 and arginine 918. Arginine 950 serves as a coordination point for Mo-molybdopterin. Substrate-binding residues include tyrosine 952 and threonine 1048. Alanine 1117 is a Mo-molybdopterin binding site. Glutamate 1302 acts as the Proton acceptor in catalysis.

Belongs to the xanthine dehydrogenase family. As to quaternary structure, homodimer. FAD is required as a cofactor. Mo-molybdopterin serves as cofactor. The cofactor is [2Fe-2S] cluster.

The protein localises to the peroxisome. It catalyses the reaction xanthine + NAD(+) + H2O = urate + NADH + H(+). The enzyme catalyses hypoxanthine + NAD(+) + H2O = xanthine + NADH + H(+). In terms of biological role, key enzyme in purine degradation. Catalyzes the oxidation of hypoxanthine to xanthine. Catalyzes the oxidation of xanthine to uric acid. This is Xanthine dehydrogenase (xdh) from Dictyostelium discoideum (Social amoeba).